We begin with the raw amino-acid sequence, 995 residues long: Probable copper-transporting ATPase HMA5 (995 aa).

Residues 1 to 299 (MATKLLSLTC…QGEIKQYYKS (299 aa)) are Cytoplasmic-facing. 2 HMA domains span residues 51–117 (SRAV…FEAS) and 129–195 (QVCR…FEAV). 4 residues coordinate Cu(+): cysteine 62, cysteine 65, cysteine 140, and cysteine 143. Residues 204–270 (SKIDLKIDGE…VIESTVFGHS (67 aa)) enclose the HMA 3; degenerate domain. The chain crosses the membrane as a helical span at residues 300–321 (FLWSLVFTVPVFLTAMVFMYIP). The Extracellular segment spans residues 322-340 (GIKDLLMFKVINMLTVGEI). The chain crosses the membrane as a helical span at residues 341-360 (IRCVLATPVQFVIGWRFYTG). The Cytoplasmic portion of the chain corresponds to 361 to 367 (SYKALRR). A helical transmembrane segment spans residues 368-388 (GSANMDVLIALGTNAAYFYSL). Residues 389–406 (YTVLRAATSPDFKGVDFF) are Extracellular-facing. Residues 407–427 (ETSAMLISFIILGKYLEVMAK) form a helical membrane-spanning segment. At 428 to 561 (GKTSQAIAKL…KAPVQKLADR (134 aa)) the chain is on the cytoplasmic side. A helical transmembrane segment spans residues 562-584 (ISKFFVPLVIFLSFSTWLAWFLA). Residues 585-605 (GKLHWYPESWIPSSMDSFELA) are Extracellular-facing. The helical transmembrane segment at 606 to 623 (LQFGISVMVIACPCALGL) threads the bilayer. The Cytoplasmic portion of the chain corresponds to 624–920 (ATPTAVMVGT…DLSRKTFSRI (297 aa)). Residue aspartate 661 is the 4-aspartylphosphate intermediate of the active site. Residues aspartate 866 and aspartate 870 each coordinate Mg(2+). A helical membrane pass occupies residues 921–940 (RLNYVWALGYNLMGIPIAAG). The Extracellular segment spans residues 941–952 (VLFPGTRFRLPP). Residues 953-971 (WIAGAAMAASSVSVVCCSL) traverse the membrane as a helical segment. Residues 972 to 995 (LLKNYKRPKKLDHLEIREIQVERV) lie on the Cytoplasmic side of the membrane.

This sequence belongs to the cation transport ATPase (P-type) (TC 3.A.3) family. Type IB subfamily. In terms of assembly, interacts with ATX1. Expressed in roots and flowers.

The protein resides in the membrane. It carries out the reaction Cu(+)(in) + ATP + H2O = Cu(+)(out) + ADP + phosphate + H(+). In terms of biological role, involved in copper import into the cell. May play a role in copper detoxification in roots. The polypeptide is Probable copper-transporting ATPase HMA5 (HMA5) (Arabidopsis thaliana (Mouse-ear cress)).